A 680-amino-acid chain; its full sequence is MIDRYKHQQLRIGSVSPQQISAWANKILPNGEIVGEVTKPYTFHYKTNKPEKDGLFCERIFGPIKSGICACGNYRVIRNEKEDQKFCEQCGVEFVDSRIRRYQMGYIKLACPVTHVWYLKRLPSYIANLLDKPLKELEGLVYCDFSFARPIAKKPTFLRLRGSFEYEIQSWKYSIPLFFTTQCFDTFRNREISTGAGAIREQLADLDLRIIIDYSSVEWKELGEEGPTGNEWEDRKVGRRKDFLVRRVELAKHFIRTNIEPEWMVLCLLPVLPPELRPIIQIDGGKLMSSDINELYRRVIYRNNTLIDLLTTSRSTPGELVMCQEKLVQEAVDTLLDNGIRGQPMRDGHNKVYKSFSDVIEGKEGRFRETMLGKRVDYSGRSVIVVGPSLSLHRCGLPREIAIELFQIFVIRGLIRQHLASNIGVAKSKIREKEPIVWEILHEVMQGHPVLLNRAPTLHRLGIQAFQPILVEGRAICLHPLVCKGFNADFDGDQMAVHVPLSLEAQAEARLLMFSHMNLLSPAIGDPISVPTQDMLIGLYVLTSGNRRGICANRYNPCNRRNYQNKRIDGNNDKYTKEPLFSNSYDALGAYRQKRIHLDSPLWLRWQLDQRAITSREAPIEVHYESLGTYHEIYEHYLIVRNIKKEILCIYIRTTVGHISLYREIEEAIQGFCQACSDGI.

Positions 69, 71, 87, and 90 each coordinate Zn(2+). Mg(2+) is bound by residues D489, D491, and D493.

This sequence belongs to the RNA polymerase beta' chain family. RpoC1 subfamily. In plastids the minimal PEP RNA polymerase catalytic core is composed of four subunits: alpha, beta, beta', and beta''. When a (nuclear-encoded) sigma factor is associated with the core the holoenzyme is formed, which can initiate transcription. The cofactor is Mg(2+). Zn(2+) is required as a cofactor.

The protein localises to the plastid. Its subcellular location is the chloroplast. The enzyme catalyses RNA(n) + a ribonucleoside 5'-triphosphate = RNA(n+1) + diphosphate. Its function is as follows. DNA-dependent RNA polymerase catalyzes the transcription of DNA into RNA using the four ribonucleoside triphosphates as substrates. This is DNA-directed RNA polymerase subunit beta' from Manihot esculenta (Cassava).